Consider the following 228-residue polypeptide: Phosphoglycolate phosphatase (228 aa).

D9 (nucleophile) is an active-site residue. Residues D9 and D11 each contribute to the Mg(2+) site. Substrate is bound at residue K151. Mg(2+)-binding residues include D174 and D178.

Belongs to the archaeal SPP-like hydrolase family. The cofactor is Mg(2+).

The enzyme catalyses 2-phosphoglycolate + H2O = glycolate + phosphate. Catalyzes the dephosphorylation of 2-phosphoglycolate. This Pyrobaculum aerophilum (strain ATCC 51768 / DSM 7523 / JCM 9630 / CIP 104966 / NBRC 100827 / IM2) protein is Phosphoglycolate phosphatase.